A 433-amino-acid polypeptide reads, in one-letter code: Leucine-rich repeat extensin-like protein 7 (433 aa).

Residues 1–21 (MRIYQPTLLIFTTVVLLSISA) form the signal peptide. N-linked (GlcNAc...) asparagine glycosylation occurs at N71. LRR repeat units follow at residues 98–122 (VKTV…LGLL), 123–145 (TDIA…GFSQ), 146–170 (LSLL…VIGL), 171–194 (PKLK…LFDK), 196–217 (LDAL…MGNS), 219–239 (VSVL…SFGK), 241–265 (GKTL…MGLL), 266–289 (QNVT…MGQM), and 290–313 (ENLE…LCSL). N-linked (GlcNAc...) asparagine glycosylation occurs at N267. The N-linked (GlcNAc...) asparagine glycan is linked to N340. The segment at 380-433 (FSPPPSQISPSSQPLAPAPSPTSPPLSTPPPARPCPPVYSPPPPPPLSLAPSMN) is disordered. Positions 381-433 (SPPPSQISPSSQPLAPAPSPTSPPLSTPPPARPCPPVYSPPPPPPLSLAPSMN) are contains the Ser-Pro(4) repeats. Over residues 395–427 (APAPSPTSPPLSTPPPARPCPPVYSPPPPPPLS) the composition is skewed to pro residues.

Hydroxylated on proline residues in the S-P-P-P-P repeat. In terms of processing, O-glycosylated on hydroxyprolines. In terms of tissue distribution, expressed in flowers and pollen.

The protein localises to the secreted. Its subcellular location is the cell wall. In terms of biological role, modulates cell morphogenesis by regulating cell wall formation and assembly, and/or growth polarization. This is Leucine-rich repeat extensin-like protein 7 (LRX7) from Arabidopsis thaliana (Mouse-ear cress).